The following is a 567-amino-acid chain: Mitochondrial distribution and morphology protein 34 (567 aa).

Positions 1 to 224 (MSFKFNEESF…LPSALFNMSR (224 aa)) constitute an SMP-LTD domain. A compositionally biased stretch (polar residues) spans 392 to 416 (NKATETSSNLNADSEITPVSSSHNA). The tract at residues 392 to 453 (NKATETSSNL…NRSSSFTSSI (62 aa)) is disordered. The span at 417–452 (TSSVNTITSLTTSSLGSTAGSSNSKNTNRSSSFTSS) shows a compositional bias: low complexity.

The protein belongs to the MDM34 family. In terms of assembly, component of the ER-mitochondria encounter structure (ERMES) or MDM complex, composed of MMM1, MDM10, MDM12 and MDM34.

Its subcellular location is the mitochondrion outer membrane. Functionally, component of the ERMES/MDM complex, which serves as a molecular tether to connect the endoplasmic reticulum (ER) and mitochondria. Components of this complex are involved in the control of mitochondrial shape and protein biogenesis, and function in nonvesicular lipid trafficking between the ER and mitochondria. MDM34 is required for the interaction of the ER-resident membrane protein MMM1 and the outer mitochondrial membrane-resident beta-barrel protein MDM10. This Vanderwaltozyma polyspora (strain ATCC 22028 / DSM 70294 / BCRC 21397 / CBS 2163 / NBRC 10782 / NRRL Y-8283 / UCD 57-17) (Kluyveromyces polysporus) protein is Mitochondrial distribution and morphology protein 34.